The chain runs to 79 residues: Exodeoxyribonuclease 7 small subunit (79 aa).

It belongs to the XseB family. As to quaternary structure, heterooligomer composed of large and small subunits.

The protein localises to the cytoplasm. It catalyses the reaction Exonucleolytic cleavage in either 5'- to 3'- or 3'- to 5'-direction to yield nucleoside 5'-phosphates.. Functionally, bidirectionally degrades single-stranded DNA into large acid-insoluble oligonucleotides, which are then degraded further into small acid-soluble oligonucleotides. The chain is Exodeoxyribonuclease 7 small subunit from Syntrophus aciditrophicus (strain SB).